A 218-amino-acid polypeptide reads, in one-letter code: MRILCLHGMGTNSKVLEMQTSALRHQLSHSQSHKYEYVDGGEPMPPAPGIEAFIGQDESLAYYHPHSAKSILTAIDDLWEYIAEEGPFDGVLGFSQGASLAAMIIARAHHSDPPPFQFAIFFCAGLPYCEKSLSAGEVKFLRAEATQGPVIHVPTAHIFGKKDPDVSYSKAMTELCHPWGRVLLDHGAGHEIPRVPVETVDDMARAVEKVVTKAVIGQ.

Residues Ser95, Asp163, and His190 each act as charge relay system in the active site.

This sequence belongs to the LovG family.

It functions in the pathway secondary metabolite biosynthesis. Esterase; part of the gene cluster that mediates the biosynthesis of the gamma-pyrones fusapyrone (FPY) and deoxyfusapyrone (dFPY). FPY is an undecaketide and thus likely synthesized by the polyketide synthase FPY1 from acetyl-CoA functioning as starter unit and the addition of 10 malonyl-CoA extender units by successive Claisen-condensations. Next to this, FPY shares some rare features: C-glycosylated 4-deoxyglucose at C-3, a gem-dimethyl group at C-13, and an alpha-beta to beta-gamma double bond shift at C-20. During FPY biosynthesis mono-C-methyl groups are transferred to the tetra-, penta-, hexa- and heptaketide, while two C-methyl groups are transferred to the nonaketide, suggesting that the CMet domain is programmed to selectively catalyze two successive C-alpha-methylation reactions of the nonaketide, while other alpha-carbons are non- or mono-methylated only. While the origin of the 4'-deoxyglucose moiety remains opaque, its transfer to C-3 is most likely mediated by the C-glycosyltransferase FPY2. Next to this, the hydroxyl group present at C-33 and discriminating between FPY and dFPY, is likely to be installed by the cytochrome P450 monooxygenase FPY7. No putative function can be predicted for the remaining genes FPY3-FPY6. The chain is Esterase FPY3 from Fusarium mangiferae (Mango malformation disease fungus).